We begin with the raw amino-acid sequence, 463 residues long: Sodium-coupled neutral amino acid transporter 7 (463 aa).

Phosphoserine is present on Ser28. 11 consecutive transmembrane segments (helical) span residues 56–76, 82–102, 130–150, 179–199, 206–226, 240–260, 283–303, 320–340, 372–392, 396–416, and 429–449; these read AVFIVVNACLGAGLLNFPAAF, VAAGIALQMGMLVFIISGLVI, LCEVAIAVYTFGTCIAFLIII, FTISLTAFLFILPLSIPKEIG, FLSVVGTWYVTAIIIIKYIWP, ASWMAVFNAMPTICFGFQCHV, AAMVIALAVYMGTGICGFLTF, VAVAVARAFIILSVLTSYPIL, VLQTLVWFLLTLLLALFIPDI, ISVIGGLAACFIFIFPGLCLI, and ASWWALVSYGVLLVTLGAFIF.

Belongs to the amino acid/polyamine transporter 2 family. In terms of assembly, interacts with the mTORC1 complex; this interaction mediates the recruitment of mTORC1 to the lysosome and its subsequent activation. Highly expressed in the brain, including the hippocampus, especially in the granular layer of dentate gyrus cells and the pyramidal cell layer of the hippocampus, amygdala, thalamus, hypothalamus, in the layer of Purkinje cells in the cerebellum and the layers of cortex. Particularly strong expression in neurons of the ventromedial hypothalamus, basolateral amygdala, ventral tegmental area, and locus coeruleus. Not detected in glial cells, including astrocytes. In addition to brain, also expressed in the spinal cord (at protein level).

It is found in the lysosome membrane. Its subcellular location is the cell projection. The protein resides in the axon. It carries out the reaction L-glutamine(in) + Na(+)(in) = L-glutamine(out) + Na(+)(out). It catalyses the reaction L-asparagine(in) + Na(+)(in) = L-asparagine(out) + Na(+)(out). Symporter that selectively cotransports sodium ions and amino acids, such as L-glutamine and L-asparagine from the lysosome into the cytoplasm and may participates in mTORC1 activation. The transport activity requires an acidic lysosomal lumen. In Mus musculus (Mouse), this protein is Sodium-coupled neutral amino acid transporter 7.